The following is a 325-amino-acid chain: Melanocortin receptor 5 (325 aa).

Residues 1 to 37 are Extracellular-facing; it reads MNSSFHLHFLDLNLNATEGNLSGPNVKNKSSPCEDMG. N-linked (GlcNAc...) asparagine glycans are attached at residues N2, N15, N20, and N28. The helical transmembrane segment at 38–61 threads the bilayer; sequence IAVEVFLTLGVISLLENILVIGAI. Over 62-73 the chain is Cytoplasmic; sequence VKNKNLHSPMYF. Residues 74–97 form a helical membrane-spanning segment; sequence FVCSLAVADMLVSMSSAWETITIY. Residues 98-114 are Extracellular-facing; that stretch reads LLNNKHLVIADAFVRHI. A helical membrane pass occupies residues 115–138; the sequence is DNVFDSMICISVVASMCSLLAIAV. Residues 139–155 lie on the Cytoplasmic side of the membrane; sequence DRYVTIFYALRYHHIMT. Residues 156-179 traverse the membrane as a helical segment; the sequence is ARRSGAIIAGIWAFCTGCGIVFIL. Over 180–186 the chain is Extracellular; that stretch reads YSESTYV. Residues 187 to 211 form a helical membrane-spanning segment; that stretch reads ILCLISMFFAMLFLLVSLYIHMFLL. Over 212–239 the chain is Cytoplasmic; that stretch reads ARTHVKRIAALPRASSARQRTSMQGAVT. A helical transmembrane segment spans residues 240 to 265; it reads VTMLLGVFTVCWAPFFLHLTLMLSCP. The Extracellular segment spans residues 266–273; sequence QNLYCSCF. Residues 274–297 form a helical membrane-spanning segment; that stretch reads MSHFNMYLILIMCNSVMDPLIYAF. Residues 298–325 are Cytoplasmic-facing; sequence RSQEMRKTFKEIICCRGFRIACSFPRRD. S-palmitoyl cysteine attachment occurs at residues C311 and C312.

The protein belongs to the G-protein coupled receptor 1 family.

The protein localises to the cell membrane. Its function is as follows. Receptor for MSH (alpha, beta and gamma) and ACTH. The activity of this receptor is mediated by G proteins which activate adenylate cyclase. This receptor is a possible mediator of the immunomodulation properties of melanocortins. This Pan troglodytes (Chimpanzee) protein is Melanocortin receptor 5 (MC5R).